Consider the following 116-residue polypeptide: uncharacterized protein (116 aa).

Residues 97 to 116 (AKGKGNEGREEAEEASGKSK) form a disordered region. The segment covering 100-116 (KGNEGREEAEEASGKSK) has biased composition (basic and acidic residues).

The protein belongs to the UPF0440 family.

This is an uncharacterized protein from Pyrococcus horikoshii (strain ATCC 700860 / DSM 12428 / JCM 9974 / NBRC 100139 / OT-3).